The sequence spans 729 residues: DNA gyrase subunit B, chloroplastic/mitochondrial (729 aa).

Residues 510 to 617 (SEIFIVEGDS…RYQKALFDEG (108 aa)) enclose the Toprim domain. Mg(2+) is bound by residues Glu516, Asp590, and Asp592.

It belongs to the type II topoisomerase GyrB family. In terms of assembly, made up of two chains. The A chain is responsible for DNA breakage and rejoining; the B chain catalyzes ATP hydrolysis. Mg(2+) serves as cofactor. It depends on Mn(2+) as a cofactor. The cofactor is Ca(2+).

The protein localises to the plastid. It localises to the chloroplast. Its subcellular location is the mitochondrion. The catalysed reaction is ATP-dependent breakage, passage and rejoining of double-stranded DNA.. Its function is as follows. A type II topoisomerase that negatively supercoils closed circular double-stranded DNA in an ATP-dependent manner. This is DNA gyrase subunit B, chloroplastic/mitochondrial (GYRB) from Oryza sativa subsp. japonica (Rice).